The chain runs to 133 residues: UPF0102 protein CYA_0680 (133 aa).

It belongs to the UPF0102 family.

The chain is UPF0102 protein CYA_0680 from Synechococcus sp. (strain JA-3-3Ab) (Cyanobacteria bacterium Yellowstone A-Prime).